Here is a 206-residue protein sequence, read N- to C-terminus: MSYTLPSLPYAYDALEPHFDKQTMEIHHTKHHQTYVNNANAALESLPEFANLPVEELITKLDQLPADKKTVLRNNAGGHANHSLFWKGLKKGTTLQGDLKAAIERDFGSVDNFKAEFEKAAASRFGSGWAWLVLKGDKLAVVSTANQDSPLMGEAISGASGFPIMGLDVWEHAYYLKFQNRRPDYIKEFWNVVNWDEAAARFAAKK.

Residues His-27, His-82, Asp-168, and His-172 each contribute to the Mn(2+) site.

The protein belongs to the iron/manganese superoxide dismutase family. In terms of assembly, homodimer. The cofactor is Mn(2+).

It carries out the reaction 2 superoxide + 2 H(+) = H2O2 + O2. Destroys superoxide anion radicals which are normally produced within the cells and which are toxic to biological systems. The chain is Superoxide dismutase [Mn] (sodA) from Escherichia coli (strain K12).